Reading from the N-terminus, the 1070-residue chain is DNA-directed RNA polymerase subunit beta (1070 aa).

This sequence belongs to the RNA polymerase beta chain family. As to quaternary structure, in plastids the minimal PEP RNA polymerase catalytic core is composed of four subunits: alpha, beta, beta', and beta''. When a (nuclear-encoded) sigma factor is associated with the core the holoenzyme is formed, which can initiate transcription.

The protein resides in the plastid. The protein localises to the chloroplast. The enzyme catalyses RNA(n) + a ribonucleoside 5'-triphosphate = RNA(n+1) + diphosphate. In terms of biological role, DNA-dependent RNA polymerase catalyzes the transcription of DNA into RNA using the four ribonucleoside triphosphates as substrates. The protein is DNA-directed RNA polymerase subunit beta of Citrus sinensis (Sweet orange).